A 991-amino-acid polypeptide reads, in one-letter code: Antigenic heat-stable 120 kDa protein (991 aa).

Disordered stretches follow at residues 1–37 (DTSE…TPAL), 54–73 (TPSM…TSDP), and 348–384 (GQSK…TNQP). Residues 12–29 (EYTEEQKQTEEQEQKEFL) show a composition bias toward basic and acidic residues. Polar residues predominate over residues 348-373 (GQSKEQPLITPQQTTSSSVEPPQYKQ).

The protein resides in the cytoplasm. The protein is Antigenic heat-stable 120 kDa protein (sca4) of Rickettsia sibirica.